The sequence spans 457 residues: V-type ATP synthase beta chain (457 aa).

Belongs to the ATPase alpha/beta chains family.

Its function is as follows. Produces ATP from ADP in the presence of a proton gradient across the membrane. The V-type beta chain is a regulatory subunit. This is V-type ATP synthase beta chain from Clostridioides difficile (strain 630) (Peptoclostridium difficile).